The chain runs to 1452 residues: CLIP-associating protein 1 (1452 aa).

3 HEAT repeats span residues 68–87 (LLGM…RFRS), 88–124 (QIGT…QASN), and 163–200 (LTLS…HVGE). The segment at 239–299 (KNFDDEDSVD…GTAKEGAGGV (61 aa)) is disordered. Residues 253-267 (SSASSSASSKAPQAA) show a composition bias toward low complexity. 2 HEAT repeats span residues 407-442 (HGAE…IRQT) and 443-479 (HVPR…EWQT). 2 disordered regions span residues 545 to 735 (SDSI…GISQ) and 771 to 792 (YGMY…ERSY). Residues 550–569 (SLPQSDRSSSSSQESLNRPL) are compositionally biased toward low complexity. A compositionally biased stretch (polar residues) spans 573–597 (RSPTGSTVSRASTATSKSTPGSLQR). Low complexity-rich tracts occupy residues 606–621 (AATC…ASAA), 645–659 (QSSG…TPAD), and 668–682 (VVSQ…SSPG). Polar residues predominate over residues 715 to 724 (QGCSRETSPS). Positions 781–792 (SDASSACSERSY) are enriched in low complexity. The HEAT 6 repeat unit spans residues 926-963 (QQFNILMRFIVDQTQTPNLKVKVAILKYIESLARQMDP). Residues 1033–1076 (LKNSSNSSMGSPSNTIGRTPSRHSSSRASPLTSPTNCSHGGLSP) form a disordered region. Low complexity predominate over residues 1034 to 1046 (KNSSNSSMGSPSN). A compositionally biased stretch (polar residues) spans 1058-1070 (SRASPLTSPTNCS). 2 HEAT repeats span residues 1256–1293 (EHFK…NQPA) and 1374–1411 (QILP…VIGE).

This sequence belongs to the CLASP family. As to quaternary structure, interacts (via C-terminus) with clip1/clip-170, and cenpe.

It is found in the cytoplasm. The protein localises to the cytoskeleton. Its subcellular location is the microtubule organizing center. The protein resides in the centrosome. It localises to the chromosome. It is found in the centromere. The protein localises to the kinetochore. Its subcellular location is the spindle. The protein resides in the golgi apparatus. It localises to the trans-Golgi network. In terms of biological role, microtubule plus-end tracking protein that promotes the stabilization of dynamic microtubules during anaphase. Plays a crucial role in chromatin-induced microtubule formation. May also act at microtubule minus ends. May be involved in the nucleation of noncentrosomal microtubules originating from the trans-Golgi network (TGN). In Xenopus tropicalis (Western clawed frog), this protein is CLIP-associating protein 1.